Reading from the N-terminus, the 467-residue chain is Cysteine--tRNA ligase (467 aa).

Cysteine 29 lines the Zn(2+) pocket. The short motif at 31 to 41 is the 'HIGH' region element; sequence PTVYNYVHIGN. The Zn(2+) site is built by cysteine 209, histidine 234, and glutamate 238. The 'KMSKS' region signature appears at 267-271; sequence KMSKS. Lysine 270 is a binding site for ATP.

Belongs to the class-I aminoacyl-tRNA synthetase family. In terms of assembly, monomer. It depends on Zn(2+) as a cofactor.

It localises to the cytoplasm. It catalyses the reaction tRNA(Cys) + L-cysteine + ATP = L-cysteinyl-tRNA(Cys) + AMP + diphosphate. The sequence is that of Cysteine--tRNA ligase from Xylella fastidiosa (strain 9a5c).